The sequence spans 306 residues: tRNA dimethylallyltransferase (306 aa).

2–9 (GPTASGKT) lines the ATP pocket. 4-9 (TASGKT) serves as a coordination point for substrate. 2 interaction with substrate tRNA regions span residues 27–30 (DSVQ) and 152–156 (QRIVR).

This sequence belongs to the IPP transferase family. In terms of assembly, monomer. The cofactor is Mg(2+).

It carries out the reaction adenosine(37) in tRNA + dimethylallyl diphosphate = N(6)-dimethylallyladenosine(37) in tRNA + diphosphate. Functionally, catalyzes the transfer of a dimethylallyl group onto the adenine at position 37 in tRNAs that read codons beginning with uridine, leading to the formation of N6-(dimethylallyl)adenosine (i(6)A). This is tRNA dimethylallyltransferase from Magnetococcus marinus (strain ATCC BAA-1437 / JCM 17883 / MC-1).